Reading from the N-terminus, the 228-residue chain is Thermonuclease (228 aa).

The N-terminal stretch at 1-23 (MTEYLLSAGICMAIVSILLIGMA) is a signal peptide. The propeptide occupies 24-60 (ISNVSKGQYAKRFFFFATSCLVLTLVVVSSLSSSANA). Aspartate 100 provides a ligand contact to Ca(2+). Arginine 114 is an active-site residue. Positions 119 and 120 each coordinate Ca(2+). Residues glutamate 122 and arginine 166 contribute to the active site.

The protein belongs to the thermonuclease family. Requires Ca(2+) as cofactor.

It is found in the secreted. The enzyme catalyses Endonucleolytic cleavage to nucleoside 3'-phosphates and 3'-phosphooligonucleotide end-products.. In terms of biological role, enzyme that catalyzes the hydrolysis of both DNA and RNA at the 5' position of the phosphodiester bond. The sequence is that of Thermonuclease (nuc) from Staphylococcus aureus (strain MSSA476).